A 183-amino-acid chain; its full sequence is Ribosome maturation factor RimM (183 aa).

Residues 104–183 (EGDYYWKDLM…TIEVDWDPGF (80 aa)) form the PRC barrel domain.

This sequence belongs to the RimM family. Binds ribosomal protein uS19.

It localises to the cytoplasm. An accessory protein needed during the final step in the assembly of 30S ribosomal subunit, possibly for assembly of the head region. Essential for efficient processing of 16S rRNA. May be needed both before and after RbfA during the maturation of 16S rRNA. It has affinity for free ribosomal 30S subunits but not for 70S ribosomes. The chain is Ribosome maturation factor RimM from Salmonella arizonae (strain ATCC BAA-731 / CDC346-86 / RSK2980).